The following is a 357-amino-acid chain: Low-salt glycan biosynthesis nucleotidyltransferase Agl11 (357 aa).

Positions 108 and 221 each coordinate Mg(2+).

The protein belongs to the glucose-1-phosphate thymidylyltransferase family. Requires Mg(2+) as cofactor.

The protein operates within protein modification; protein glycosylation. Its pathway is cell surface structure biogenesis; S-layer biogenesis. In terms of biological role, nucleotidyltransferase involved in N-glycan biosynthetic pathway that takes place under low-salt conditions (1.75 M instead of 3.4 M). Participates in the formation of the tetrasaccharide present at 'Asn-532' of S-layer glycoprotein Csg, consisting of a sulfated hexose, 2 hexoses and rhamnose. Involved in the addition of final rhamnose (sugar 4) of the tetrasaccharide on the dolichol phosphate carrier. The chain is Low-salt glycan biosynthesis nucleotidyltransferase Agl11 (agl11) from Haloferax volcanii (strain ATCC 29605 / DSM 3757 / JCM 8879 / NBRC 14742 / NCIMB 2012 / VKM B-1768 / DS2) (Halobacterium volcanii).